A 312-amino-acid polypeptide reads, in one-letter code: Malate dehydrogenase (312 aa).

NAD(+)-binding positions include 7-13 and aspartate 34; that span reads GAAGGIG. Substrate is bound by residues arginine 81 and arginine 87. NAD(+)-binding positions include asparagine 94 and 117–119; that span reads ITN. Positions 119 and 153 each coordinate substrate. Catalysis depends on histidine 177, which acts as the Proton acceptor. Methionine 227 provides a ligand contact to NAD(+).

The protein belongs to the LDH/MDH superfamily. MDH type 1 family. Homodimer.

It catalyses the reaction (S)-malate + NAD(+) = oxaloacetate + NADH + H(+). Catalyzes the reversible oxidation of malate to oxaloacetate. The chain is Malate dehydrogenase from Escherichia coli (strain 55989 / EAEC).